A 1172-amino-acid polypeptide reads, in one-letter code: Pesticidal crystal protein Cry1Ha (1172 aa).

Belongs to the delta endotoxin family.

Promotes colloidosmotic lysis by binding to the midgut epithelial cells of insects. The polypeptide is Pesticidal crystal protein Cry1Ha (cry1Ha) (Bacillus thuringiensis).